A 481-amino-acid polypeptide reads, in one-letter code: Phosphoglycerate kinase, chloroplastic (481 aa).

The transit peptide at 1-75 (MASATASHTL…SSKPIRGVAS (75 aa)) directs the protein to the chloroplast. Positions 98, 99, 101, 115, 137, 138, 140, 141, 196, 228, and 229 each coordinate (2R)-3-phosphoglycerate. Residue G274 participates in ADP binding. Residue G274 coordinates CDP. The AMP site is built by K276 and K280. K280 is an ATP binding site. G298 is a binding site for ADP. Residue G298 participates in CDP binding. AMP-binding residues include G299 and G371. ATP is bound by residues G299 and G371. G396 and F401 together coordinate CDP. ADP is bound at residue F401. Residue E402 coordinates AMP. ATP is bound by residues E402, D433, and S434. D433 is a Mg(2+) binding site.

Belongs to the phosphoglycerate kinase family. Monomer. Requires Mg(2+) as cofactor.

The protein resides in the plastid. It is found in the chloroplast. It carries out the reaction (2R)-3-phosphoglycerate + ATP = (2R)-3-phospho-glyceroyl phosphate + ADP. Its pathway is carbohydrate biosynthesis; Calvin cycle. The sequence is that of Phosphoglycerate kinase, chloroplastic from Nicotiana tabacum (Common tobacco).